A 132-amino-acid chain; its full sequence is Large ribosomal subunit protein uL14 (132 aa).

Belongs to the universal ribosomal protein uL14 family. In terms of assembly, part of the 50S ribosomal subunit. Forms a cluster with proteins L3 and L24e, part of which may contact the 16S rRNA in 2 intersubunit bridges.

Its function is as follows. Binds to 23S rRNA. Forms part of two intersubunit bridges in the 70S ribosome. This chain is Large ribosomal subunit protein uL14, found in Natronomonas pharaonis (strain ATCC 35678 / DSM 2160 / CIP 103997 / JCM 8858 / NBRC 14720 / NCIMB 2260 / Gabara) (Halobacterium pharaonis).